A 506-amino-acid polypeptide reads, in one-letter code: COP9 signalosome complex subunit 2 (506 aa).

The 169-residue stretch at 252–420 (SEENWEEAQS…GTVVVESASD (169 aa)) folds into the PCI domain. A compositionally biased stretch (basic residues) spans 482-491 (SGHRFRRGGK). Positions 482–506 (SGHRFRRGGKGSKAGGGLGMKTGLF) are disordered. The span at 492–506 (GSKAGGGLGMKTGLF) shows a compositional bias: gly residues.

This sequence belongs to the CSN2 family. Component of the COP9 signalosome (CSN) complex.

The protein localises to the cytoplasm. Its subcellular location is the nucleus. Component of the COP9 signalosome (CSN) complex that acts as an regulator of the ubiquitin (Ubl) conjugation pathway by mediating the deneddylation of the cullin subunit of SCF-type E3 ubiquitin-protein ligase complexes. The CSN complex seems to link protein degradation to sexual development. Required for fruit body formation. This chain is COP9 signalosome complex subunit 2 (csnB), found in Emericella nidulans (strain FGSC A4 / ATCC 38163 / CBS 112.46 / NRRL 194 / M139) (Aspergillus nidulans).